Reading from the N-terminus, the 81-residue chain is Large ribosomal subunit protein bL31B (81 aa).

Belongs to the bacterial ribosomal protein bL31 family. Type B subfamily. As to quaternary structure, part of the 50S ribosomal subunit.

This chain is Large ribosomal subunit protein bL31B, found in Oceanobacillus iheyensis (strain DSM 14371 / CIP 107618 / JCM 11309 / KCTC 3954 / HTE831).